Consider the following 228-residue polypeptide: Ribose-5-phosphate isomerase A (228 aa).

Substrate-binding positions include 29–32 (TGST), 85–88 (DGAD), and 98–101 (KGGG). Residue glutamate 107 is the Proton acceptor of the active site. Lysine 125 serves as a coordination point for substrate.

The protein belongs to the ribose 5-phosphate isomerase family. In terms of assembly, homodimer.

The catalysed reaction is aldehydo-D-ribose 5-phosphate = D-ribulose 5-phosphate. It participates in carbohydrate degradation; pentose phosphate pathway; D-ribose 5-phosphate from D-ribulose 5-phosphate (non-oxidative stage): step 1/1. Catalyzes the reversible conversion of ribose-5-phosphate to ribulose 5-phosphate. This is Ribose-5-phosphate isomerase A from Staphylococcus aureus (strain Mu50 / ATCC 700699).